The following is a 60-amino-acid chain: MTCPICGSKTAPSYRPFCSKRCADLDLAKWLNGSYAIPASSEDEEEPLDQEAETPVAPRH.

Residues Cys-3, Cys-6, Cys-18, and Cys-22 each contribute to the Zn(2+) site. The interval 38 to 60 (PASSEDEEEPLDQEAETPVAPRH) is disordered. Residues 41–52 (SEDEEEPLDQEA) show a composition bias toward acidic residues.

The protein belongs to the DNA gyrase inhibitor YacG family. As to quaternary structure, interacts with GyrB. Zn(2+) serves as cofactor.

In terms of biological role, inhibits all the catalytic activities of DNA gyrase by preventing its interaction with DNA. Acts by binding directly to the C-terminal domain of GyrB, which probably disrupts DNA binding by the gyrase. This is DNA gyrase inhibitor YacG from Ruegeria pomeroyi (strain ATCC 700808 / DSM 15171 / DSS-3) (Silicibacter pomeroyi).